A 265-amino-acid polypeptide reads, in one-letter code: H-2 class II histocompatibility antigen, A beta chain (265 aa).

Residues 1 to 27 (MALQIPSLLLSAAVVVLMVLSSPGTEG) form the signal peptide. A beta-1 region spans residues 28–122 (GDSERHFVYQ…PETHTSLRRL (95 aa)). Topologically, residues 28-226 (GDSERHFVYQ…RAQSESAWSK (199 aa)) are extracellular. Cystine bridges form between cysteine 42/cysteine 106 and cysteine 145/cysteine 201. Residue asparagine 46 is glycosylated (N-linked (GlcNAc...) asparagine). The beta-2 stretch occupies residues 123–216 (EQPNVVISLS…SLKSPITVEW (94 aa)). Positions 125 to 213 (PNVVISLSRT…EHPSLKSPIT (89 aa)) constitute an Ig-like C1-type domain. Residues 217 to 226 (RAQSESAWSK) are connecting peptide. A helical transmembrane segment spans residues 227–247 (MLSGIGGCVLGVIFLGLGLFI). At 248-265 (RHRSQKGPRGPPPAGLLQ) the chain is on the cytoplasmic side.

The protein belongs to the MHC class II family. Post-translationally, ubiquitinated in immature dendritic cells leading to down-regulation of MHC class II.

It localises to the membrane. The chain is H-2 class II histocompatibility antigen, A beta chain (H2-Ab1) from Mus musculus (Mouse).